Here is a 379-residue protein sequence, read N- to C-terminus: Phospho-N-acetylmuramoyl-pentapeptide-transferase (379 aa).

The next 10 membrane-spanning stretches (helical) occupy residues 27 to 47, 76 to 96, 100 to 120, 135 to 155, 185 to 205, 218 to 238, 255 to 275, 283 to 303, 307 to 327, and 356 to 376; these read FRTAFASLTALFMGLIIGPAV, TMGGVLITIAIIVPTLLWADL, FVWIAMLATIAFGAIGFTDDY, AKMGLQILVAILVAISLVLVQ, PHIWIIAYIPFLAFVAIVLVG, GLAIGCTVIAAGALTVLTYVS, VGELSIFCGAMVGSAIGFLWY, FMGDVGSLALGGAIGTVAVII, LLLPFIGGVFVLEALSVILQV, and KIIVRFWIASLVFALFALTTL.

This sequence belongs to the glycosyltransferase 4 family. MraY subfamily. Requires Mg(2+) as cofactor.

Its subcellular location is the cell inner membrane. The catalysed reaction is UDP-N-acetyl-alpha-D-muramoyl-L-alanyl-gamma-D-glutamyl-meso-2,6-diaminopimeloyl-D-alanyl-D-alanine + di-trans,octa-cis-undecaprenyl phosphate = di-trans,octa-cis-undecaprenyl diphospho-N-acetyl-alpha-D-muramoyl-L-alanyl-D-glutamyl-meso-2,6-diaminopimeloyl-D-alanyl-D-alanine + UMP. It participates in cell wall biogenesis; peptidoglycan biosynthesis. Functionally, catalyzes the initial step of the lipid cycle reactions in the biosynthesis of the cell wall peptidoglycan: transfers peptidoglycan precursor phospho-MurNAc-pentapeptide from UDP-MurNAc-pentapeptide onto the lipid carrier undecaprenyl phosphate, yielding undecaprenyl-pyrophosphoryl-MurNAc-pentapeptide, known as lipid I. The chain is Phospho-N-acetylmuramoyl-pentapeptide-transferase from Koribacter versatilis (strain Ellin345).